Reading from the N-terminus, the 407-residue chain is Peptidase T (407 aa).

H82 is a binding site for Zn(2+). The active site involves D84. Residue D143 participates in Zn(2+) binding. Catalysis depends on E177, which acts as the Proton acceptor. E178, D200, and H382 together coordinate Zn(2+).

This sequence belongs to the peptidase M20B family. It depends on Zn(2+) as a cofactor.

The protein localises to the cytoplasm. The catalysed reaction is Release of the N-terminal residue from a tripeptide.. Its function is as follows. Cleaves the N-terminal amino acid of tripeptides. In Streptococcus thermophilus (strain CNRZ 1066), this protein is Peptidase T.